We begin with the raw amino-acid sequence, 369 residues long: tRNA(Met) cytidine acetate ligase (369 aa).

Residues 7 to 20, Gly-96, Asn-152, and Arg-175 contribute to the ATP site; that span reads VAEFNPFHNGHKYL.

Belongs to the TmcAL family.

The protein resides in the cytoplasm. The enzyme catalyses cytidine(34) in elongator tRNA(Met) + acetate + ATP = N(4)-acetylcytidine(34) in elongator tRNA(Met) + AMP + diphosphate. Functionally, catalyzes the formation of N(4)-acetylcytidine (ac(4)C) at the wobble position of elongator tRNA(Met), using acetate and ATP as substrates. First activates an acetate ion to form acetyladenylate (Ac-AMP) and then transfers the acetyl group to tRNA to form ac(4)C34. The protein is tRNA(Met) cytidine acetate ligase of Streptococcus agalactiae serotype III (strain NEM316).